The sequence spans 503 residues: Pre-glycoprotein polyprotein GP complex (503 aa).

The N-myristoyl glycine; by host moiety is linked to residue glycine 2. The Extracellular portion of the chain corresponds to 2–17 (GQIVTLIQSIPEVLQE). A helical membrane pass occupies residues 18-33 (VFNVALIIVSVLCIVK). Topologically, residues 34-58 (GFVNLMRCGLFQLVTFLILSGRSCD) are cytoplasmic. Residue cysteine 57 coordinates Zn(2+). The Extracellular segment spans residues 59–446 (SMMIDRRHNL…QGKTPLALTD (388 aa)). Disulfide bonds link cysteine 86-cysteine 248, cysteine 293-cysteine 306, cysteine 315-cysteine 324, and cysteine 378-cysteine 399. N-linked (GlcNAc...) asparagine; by host glycosylation is found at asparagine 89, asparagine 111, asparagine 181, and asparagine 241. Asparagine 379, asparagine 387, asparagine 404, and asparagine 409 each carry an N-linked (GlcNAc...) asparagine; by host glycan. The chain crosses the membrane as a helical span at residues 447 to 467 (ICFWSLVFYTITVFLHIVGIP). Residues 468-503 (THRHIIGDGCPKPHRITRNSLCSCGYYKYQRNLTNG) are Cytoplasmic-facing. Zn(2+) is bound by residues histidine 469, histidine 471, cysteine 477, histidine 481, cysteine 489, and cysteine 491.

The protein belongs to the arenaviridae GPC protein family. As to quaternary structure, interacts with glycoprotein G2. Part of the GP complex (GP-C) together with glycoprotein G1 and glycoprotein G2. The GP-complex interacts with protein Z, which interacts with ribonucleocapsid; these interactions may induce virion budding. In terms of assembly, homotrimer; disulfide-linked. In pre-fusion state, G1 homotrimers bind G2 homotrimers via ionic interactions. Part of the GP complex (GP-C) together with glycoprotein G2 and the stable signal peptide. The GP-complex interacts with protein Z, which interacts with ribonucleocapsid; these interactions may induce virion budding. Homotrimer. Interacts with the stable signal peptide. In pre-fusion state, G2 homotrimers bind G1 homotrimers via ionic interactions. Part of the GP complex (GP-C) together with glycoprotein G1 and the stable signal peptide. Acidification in the endosome triggers rearrangements, which ultimately leads to a 6 helix bundle formed by the two heptad repeat domains (HR1 and HR2) in post-fusion state. The GP-complex interacts with protein Z, which interacts with ribonucleocapsid; these interactions may induce virion budding. Specific enzymatic cleavages in vivo yield mature proteins. GP-C polyprotein is cleaved in the endoplasmic reticulum by the host protease MBTPS1. Only cleaved glycoprotein is incorporated into virions. Post-translationally, the SSP remains stably associated with the GP complex following cleavage by signal peptidase and plays crucial roles in the trafficking of GP through the secretory pathway. In terms of processing, myristoylation is necessary for GP2-mediated fusion activity.

The protein resides in the virion membrane. Its subcellular location is the host endoplasmic reticulum membrane. It localises to the host Golgi apparatus membrane. The protein localises to the host cell membrane. In terms of biological role, functions as a cleaved signal peptide that is retained as the third component of the GP complex (GP-C). Helps to stabilize the spike complex in its native conformation. The SSP is required for efficient glycoprotein expression, post-translational maturation cleavage of G1 and G2, glycoprotein transport to the cell surface plasma membrane, formation of infectious virus particles, and acid pH-dependent glycoprotein-mediated cell fusion. Its function is as follows. Forms the virion spikes together with glycoprotein G2. The glycoprotein spike trimers are connected to the underlying matrix. Interacts with the host receptor leading to virus endocytosis. Forms the virion spikes together with glycoprotein G1. The glycoprotein spike trimers are connected to the underlying matrix. Class I viral fusion protein that directs fusion of viral and host endosomal membranes, leading to delivery of the nucleocapsid into the cytoplasm. Membrane fusion is mediated by irreversible conformational changes induced by acidification. The sequence is that of Pre-glycoprotein polyprotein GP complex from Cavia cutleri (Guinea pig).